Here is a 68-residue protein sequence, read N- to C-terminus: Small ribosomal subunit protein bS21 (68 aa).

A compositionally biased stretch (basic and acidic residues) spans 37–49; sequence EKPSEKRAREKAA. Positions 37–68 are disordered; the sequence is EKPSEKRAREKAAAVRRARKMERKRMERDGIK. The segment covering 50–59 has biased composition (basic residues); sequence AVRRARKMER.

It belongs to the bacterial ribosomal protein bS21 family.

The sequence is that of Small ribosomal subunit protein bS21 from Erythrobacter litoralis (strain HTCC2594).